The sequence spans 406 residues: NADH-ubiquinone oxidoreductase 49 kDa subunit (406 aa).

This sequence belongs to the complex I 49 kDa subunit family. In terms of assembly, complex I is composed of 45 different subunits. Component of the iron-sulfur (IP) fragment of the enzyme.

The protein localises to the mitochondrion inner membrane. It catalyses the reaction a ubiquinone + NADH + 5 H(+)(in) = a ubiquinol + NAD(+) + 4 H(+)(out). Its function is as follows. Core subunit of the mitochondrial membrane respiratory chain NADH dehydrogenase (Complex I) that is believed to belong to the minimal assembly required for catalysis. Complex I functions in the transfer of electrons from NADH to the respiratory chain. The immediate electron acceptor for the enzyme is believed to be ubiquinone. In Dictyostelium citrinum (Slime mold), this protein is NADH-ubiquinone oxidoreductase 49 kDa subunit (nad7).